The following is a 495-amino-acid chain: ATP synthase subunit beta, chloroplastic (495 aa).

172 to 179 (GGAGVGKT) is a binding site for ATP.

It belongs to the ATPase alpha/beta chains family. As to quaternary structure, F-type ATPases have 2 components, CF(1) - the catalytic core - and CF(0) - the membrane proton channel. CF(1) has five subunits: alpha(3), beta(3), gamma(1), delta(1), epsilon(1). CF(0) has four main subunits: a(1), b(1), b'(1) and c(9-12).

Its subcellular location is the plastid. The protein localises to the chloroplast thylakoid membrane. It catalyses the reaction ATP + H2O + 4 H(+)(in) = ADP + phosphate + 5 H(+)(out). In terms of biological role, produces ATP from ADP in the presence of a proton gradient across the membrane. The catalytic sites are hosted primarily by the beta subunits. This is ATP synthase subunit beta, chloroplastic from Beaucarnea recurvata (Elephant-foot tree).